Consider the following 513-residue polypeptide: Palmitoyltransferase ZDHHC14 (513 aa).

The Cytoplasmic portion of the chain corresponds to 1-59 (MHLGVEEPIRECQYNQICTHNSSPMDTPHIKKKKNKRKWQVFPGRNRFYCNGRIMMAKQ). Residues 60 to 80 (TGVFYLTMVLILVTSGLFFAF) form a helical membrane-spanning segment. At 81–88 (DCPFLASN) the chain is on the lumenal side. Residues 89–109 (LTPAIPAIGGVLFVFVMGMLL) traverse the membrane as a helical segment. The Cytoplasmic segment spans residues 110-207 (RASFSDPGVL…GNCVGRRNYR (98 aa)). One can recognise a DHHC domain in the interval 164–214 (KYCFTCKIFRPPRASHCSLCDNCVDRFDHHCPWVGNCVGRRNYRFFYLFIL). C194 serves as the catalytic S-palmitoyl cysteine intermediate. Residues 208–228 (FFYLFILSLSFLTIFIFAFVI) form a helical membrane-spanning segment. The Lumenal portion of the chain corresponds to 229–266 (THVILNALRKALALSTAADFEAVQKDPTGLAFLVLSKT). A helical membrane pass occupies residues 267 to 287 (ALLDILEVVVCFFSVWSIVGL). The Cytoplasmic portion of the chain corresponds to 288–513 (SGFHTYLISS…VRGLVKLSSV (226 aa)). The interval 348–369 (FIQPDTPQPATQTNGTSACPPN) is disordered. Over residues 355 to 369 (QPATQTNGTSACPPN) the composition is skewed to polar residues.

This sequence belongs to the DHHC palmitoyltransferase family. ERF2/ZDHHC9 subfamily.

The protein localises to the endoplasmic reticulum membrane. It localises to the golgi apparatus membrane. It catalyses the reaction L-cysteinyl-[protein] + hexadecanoyl-CoA = S-hexadecanoyl-L-cysteinyl-[protein] + CoA. In terms of biological role, palmitoyltransferase that could catalyze the addition of palmitate onto various protein substrates. The sequence is that of Palmitoyltransferase ZDHHC14 (zdhhc14) from Danio rerio (Zebrafish).